We begin with the raw amino-acid sequence, 284 residues long: tRNA pseudouridine synthase A (284 aa).

Asp62 serves as the catalytic Nucleophile. Residue Tyr120 coordinates substrate.

Belongs to the tRNA pseudouridine synthase TruA family. Homodimer.

It catalyses the reaction uridine(38/39/40) in tRNA = pseudouridine(38/39/40) in tRNA. Formation of pseudouridine at positions 38, 39 and 40 in the anticodon stem and loop of transfer RNAs. The sequence is that of tRNA pseudouridine synthase A from Thermosynechococcus vestitus (strain NIES-2133 / IAM M-273 / BP-1).